Consider the following 105-residue polypeptide: Small ribosomal subunit protein uS10 (105 aa).

It belongs to the universal ribosomal protein uS10 family. In terms of assembly, part of the 30S ribosomal subunit.

Involved in the binding of tRNA to the ribosomes. This chain is Small ribosomal subunit protein uS10, found in Synechococcus sp. (strain JA-3-3Ab) (Cyanobacteria bacterium Yellowstone A-Prime).